A 147-amino-acid chain; its full sequence is Cyanate hydratase (147 aa).

Residues Arg-88, Glu-91, and Ser-114 contribute to the active site.

Belongs to the cyanase family.

It catalyses the reaction cyanate + hydrogencarbonate + 3 H(+) = NH4(+) + 2 CO2. Catalyzes the reaction of cyanate with bicarbonate to produce ammonia and carbon dioxide. The sequence is that of Cyanate hydratase from Methylibium petroleiphilum (strain ATCC BAA-1232 / LMG 22953 / PM1).